The chain runs to 710 residues: Choline transporter-like protein 2 (710 aa).

Residues 1-34 (MEDDGKSPPDSAYGEPKKYDPNFKGPIQNRGCTD) lie on the Cytoplasmic side of the membrane. The chain crosses the membrane as a helical span at residues 35–55 (ILCCILIVLGIIAYVAVGIVA). The Extracellular segment spans residues 56–236 (WTYGDPRKVI…KIFEDYTVSW (181 aa)). N-linked (GlcNAc...) asparagine glycosylation is found at Asn-147, Asn-190, and Asn-204. A helical membrane pass occupies residues 237–257 (YWIIIGLIIAMVISLIFVVLL). Residues 258 to 260 (RFL) are Cytoplasmic-facing. Residues 261–281 (AGIMVWVMIVLVIAVMGYGIF) form a helical membrane-spanning segment. The Extracellular segment spans residues 282–319 (HCYMEYARLKGQSGSDVTLKDIGFQTDIRVYLHLRQTW). Residues 320-340 (LAFMIILCILEVIVILLLIFL) traverse the membrane as a helical segment. Residues 341–368 (RKRIMIAIALIKEASRAVGFVMSSLVFP) lie on the Cytoplasmic side of the membrane. Residues 369-389 (LFTFLLVCLCIAYWAITAVFL) traverse the membrane as a helical segment. The Extracellular segment spans residues 390 to 458 (STSNEAVYKV…FQIYNAFMFL (69 aa)). N-linked (GlcNAc...) asparagine glycans are attached at residues Asn-401, Asn-418, and Asn-421. The helical transmembrane segment at 459-481 (WLANFVIALGQVTLAGAFASYYW) threads the bilayer. Over 482–508 (AFKKPDDMPAFPIFSSLGRALRYHTGS) the chain is Cytoplasmic. A helical membrane pass occupies residues 509-529 (LAFGSLILAIVQMIRILLEYL). The Extracellular portion of the chain corresponds to 530–567 (DHKLKGADNKCARFLLCCLKCCFWCLEKFIKFLNRNAY). Residues 568–588 (IMIAIYGTNFCTSARNAFFLL) form a helical membrane-spanning segment. The Cytoplasmic segment spans residues 589-603 (MRNIIRVAVLDKVTD). The chain crosses the membrane as a helical span at residues 604–624 (FLLFLGKLLVVGCVGILAFFF). The Extracellular segment spans residues 625–642 (FSRRIQIVQDTAPTLNYY). A helical membrane pass occupies residues 643–663 (WVPILTVILGSYLIAHGFFSV). At 664-710 (YGMCVDTLFLCFLEDLERNDGSTERPYFMSGSLQKLLNKSNQTKPDK) the chain is on the cytoplasmic side.

Belongs to the CTL (choline transporter-like) family.

Its subcellular location is the cell membrane. The protein localises to the mitochondrion outer membrane. The catalysed reaction is choline(out) + n H(+)(in) = choline(in) + n H(+)(out). It carries out the reaction ethanolamine(out) + n H(+)(in) = ethanolamine(in) + n H(+)(out). In terms of biological role, choline/H+ antiporter, mainly in mitochodria. Also acts as a low-affinity ethanolamine/H+ antiporter, regulating the supply of extracellular ethanolamine (Etn) for the CDP-Etn pathway, redistribute intracellular Etn and balance the CDP-Cho and CDP-Etn arms of the Kennedy pathway. This chain is Choline transporter-like protein 2 (slc44a2), found in Xenopus laevis (African clawed frog).